We begin with the raw amino-acid sequence, 954 residues long: Valine--tRNA ligase (954 aa).

The 'HIGH' region motif lies at proline 48 to histidine 58. The 'KMSKS' region motif lies at lysine 560–serine 564. An ATP-binding site is contributed by lysine 563. The stretch at alanine 883–leucine 954 forms a coiled coil.

It belongs to the class-I aminoacyl-tRNA synthetase family. ValS type 1 subfamily. Monomer.

The protein resides in the cytoplasm. It catalyses the reaction tRNA(Val) + L-valine + ATP = L-valyl-tRNA(Val) + AMP + diphosphate. Functionally, catalyzes the attachment of valine to tRNA(Val). As ValRS can inadvertently accommodate and process structurally similar amino acids such as threonine, to avoid such errors, it has a 'posttransfer' editing activity that hydrolyzes mischarged Thr-tRNA(Val) in a tRNA-dependent manner. In Actinobacillus pleuropneumoniae serotype 3 (strain JL03), this protein is Valine--tRNA ligase.